A 321-amino-acid chain; its full sequence is Cytochrome f (321 aa).

A signal peptide spans 1-38; sequence MKKNFYTISKTMSRSLKLILFSVFIGFSIFLIPQPTWA. Residues tyrosine 39, cysteine 59, cysteine 62, and histidine 63 each coordinate heme. A helical membrane pass occupies residues 288–308; that stretch reads VIGMIIFFIGVGLSQIMLVLK.

The protein belongs to the cytochrome f family. As to quaternary structure, the 4 large subunits of the cytochrome b6-f complex are cytochrome b6, subunit IV (17 kDa polypeptide, PetD), cytochrome f and the Rieske protein, while the 4 small subunits are PetG, PetL, PetM and PetN. The complex functions as a dimer. Heme is required as a cofactor.

The protein resides in the cellular thylakoid membrane. Its function is as follows. Component of the cytochrome b6-f complex, which mediates electron transfer between photosystem II (PSII) and photosystem I (PSI), cyclic electron flow around PSI, and state transitions. This is Cytochrome f from Prochlorococcus marinus (strain NATL2A).